We begin with the raw amino-acid sequence, 356 residues long: uncharacterized protein (356 aa).

This is an uncharacterized protein from Saccharolobus islandicus (Sulfolobus islandicus).